We begin with the raw amino-acid sequence, 375 residues long: Deoxyribonuclease-2 (375 aa).

The signal sequence occupies residues 1–21; the sequence is MGLSPAAVLIFLLLGVSQTYA. Residue Asn-131 is glycosylated (N-linked (GlcNAc...) asparagine).

This sequence belongs to the DNase II family.

It catalyses the reaction Endonucleolytic cleavage to nucleoside 3'-phosphates and 3'-phosphooligonucleotide end-products.. In terms of biological role, hydrolyzes DNA under acidic conditions with a preference for double-stranded DNA. Implicated in apoptosis. The chain is Deoxyribonuclease-2 (nuc-1) from Caenorhabditis elegans.